Consider the following 248-residue polypeptide: Methyl-coenzyme M reductase subunit gamma (248 aa).

Arg-121 lines the coenzyme M pocket.

The protein belongs to the methyl-coenzyme M reductase gamma subunit family. In terms of assembly, MCR is a hexamer of two alpha, two beta, and two gamma chains, forming a dimer of heterotrimers. It depends on coenzyme F430 as a cofactor.

Its subcellular location is the cytoplasm. The enzyme catalyses coenzyme B + methyl-coenzyme M = methane + coenzyme M-coenzyme B heterodisulfide. It functions in the pathway one-carbon metabolism; methyl-coenzyme M reduction; methane from methyl-coenzyme M: step 1/1. Component of the methyl-coenzyme M reductase (MCR) I that catalyzes the reductive cleavage of methyl-coenzyme M (CoM-S-CH3 or 2-(methylthio)ethanesulfonate) using coenzyme B (CoB or 7-mercaptoheptanoylthreonine phosphate) as reductant which results in the production of methane and the mixed heterodisulfide of CoB and CoM (CoM-S-S-CoB). This is the final step in methanogenesis. This chain is Methyl-coenzyme M reductase subunit gamma (mcrG), found in Methanosarcina barkeri (strain Fusaro / DSM 804).